The primary structure comprises 497 residues: Di-/tripeptide transporter (497 aa).

12 helical membrane passes run 3–23 (AILLFYMYYAVTKGGLGMSQT), 26–46 (ASIMSIYGSLVYLSTLVGGWL), 57–77 (VFYGGVLIMLGHIVLALPAGV), 84–104 (IALIVVGTGLLKPNVSDMVGG), 119–139 (IFVFGINLGSIIAPWLVPWAA), 155–175 (AGFSLAAVGMFFGLVQYVLGG), 199–219 (IKWVVIIIIAIVAILAAMAGV), 227–247 (VITLLTILAIALPIYYFVMMF), 294–314 (FIILIALIIMASILIPNKVII), 321–341 (LVLLVFYWIGLNLIPFSTFVL), 372–392 (GIEIPLFLRQLIINIFTLIIL), and 452–472 (IVIIIFYLVKMAALWWAWSYI).

It belongs to the major facilitator superfamily. Proton-dependent oligopeptide transporter (POT/PTR) (TC 2.A.17) family.

The protein localises to the cell membrane. Proton-dependent uptake of di- or tri-peptides. The sequence is that of Di-/tripeptide transporter (dtpT) from Lactobacillus helveticus (Lactobacillus suntoryeus).